Here is a 343-residue protein sequence, read N- to C-terminus: Major histocompatibility complex class I-related protein 1 (343 aa).

The N-terminal stretch at 1-18 (MMFLLPFLTVFLAKQSHT) is a signal peptide. The interval 19-105 (RTHSLRYFRL…RHLQRHYNHS (87 aa)) is alpha-1. The antigen-binding cleft stretch occupies residues 19–197 (RTHSLRYFRL…EYGSDALERT (179 aa)). Residues 19 to 298 (RTHSLRYFRL…QESGNTLLVA (280 aa)) lie on the Extracellular side of the membrane. 8-(9H-purin-6-yl)-2-oxa-8-azabicyclo[3.3.1]nona-3,6-diene-4,6-dicarbaldehyde-binding residues include Tyr25 and Arg27. 5-(2-oxoethylideneamino)-6-(D-ribitylamino)uracil is bound by residues Arg27, Ser42, and Lys61. The 5-(2-oxopropylideneamino)-6-(D-ribitylamino)uracil site is built by Arg27, Ser42, and Lys61. Arg27, Ser42, and Lys61 together coordinate 7-hydroxy-6-methyl-8-(1-D-ribityl)lumazine. 2 residues coordinate 8-(9H-purin-6-yl)-2-oxa-8-azabicyclo[3.3.1]nona-3,6-diene-4,6-dicarbaldehyde: Lys61 and His76. Lys61 contributes to the 2-amino-4-oxopteridine-6-carbaldehyde binding site. Lys61 contributes to the pyridoxal binding site. Asn103 carries an N-linked (GlcNAc...) asparagine glycan. Positions 106–197 (GLHTYQRMIG…EYGSDALERT (92 aa)) are alpha-2. Arg112 is a binding site for 8-(9H-purin-6-yl)-2-oxa-8-azabicyclo[3.3.1]nona-3,6-diene-4,6-dicarbaldehyde. Residues Arg112, Tyr170, and Gln171 each contribute to the 5-(2-oxoethylideneamino)-6-(D-ribitylamino)uracil site. 5-(2-oxopropylideneamino)-6-(D-ribitylamino)uracil contacts are provided by Arg112, Tyr170, and Gln171. 7-hydroxy-6-methyl-8-(1-D-ribityl)lumazine-binding residues include Arg112, Tyr170, and Gln171. 2 disulfides stabilise this stretch: Cys116–Cys179 and Cys218–Cys274. Residues 198–289 (EHPVVRTTRK…GLQMVLEAPQ (92 aa)) are alpha-3. The Ig-like C1-type domain maps to 200–302 (PVVRTTRKET…NTLLVANTIS (103 aa)). The interval 290-298 (ESGNTLLVA) is connecting peptide. Residues 299–319 (NTISGTIILIIVLAGVGALIW) traverse the membrane as a helical segment. At 320–343 (RRRSREPKEVMYQPTQVNEGSSPS) the chain is on the cytoplasmic side.

Heterotrimer that consists of MR1, B2M and metabolite antigen. Major classes of metabolite ligands presented by MR1 include riboflavin-related antigens, pyrimidines and ribityl lumazines, nucleobase adducts and folate derivatives. Forms reversible covalent Schiff base complexes with microbial pyrimidine-based metabolite, which serves as a molecular switch triggering complete folding, stable association with B2M and translocation of the ternary complex from endoplasmic reticulum to the plasma membrane. Alternatively, forms non-Schiff base complexes with ribityl lumazines. On antigen-presenting cells, the ternary complex interacts with TCR on MR1-restricted T cells. Interacts with TAPBP and TAPBPL chaperones in the endoplasmic reticulum. TAPBP associated or not with MHC class I peptide loading complex binds ligand-free MR1 or MR1-B2M complex, providing for stable MR1 pools ready for metabolite antigen processing. TAPBPL interacts with MR1 in a ligand-independent way; this interaction may stabilize MR1 pool and facilitate ligand loading and dissociation. Structurally, MR1-B2M heterodimer adopts a topology similar to classical MHC class I molecules, with alpha-1 and alpha-2 domains of MR1 forming the antigen-binding cleft composed of two alpha-helices resting on a floor of 7-stranded anti-parallel beta-pleated sheet. MR1-B2M heterodimer (via alpha-helices) interacts with TCR (via CDR domains). In terms of processing, N-glycosylated. In terms of tissue distribution, expressed in kidney, liver, testis, spleen, thymus, brain, and heart.

It is found in the cell membrane. The protein localises to the endoplasmic reticulum membrane. Its subcellular location is the golgi apparatus membrane. It localises to the early endosome membrane. The protein resides in the late endosome membrane. In terms of biological role, antigen-presenting molecule specialized in displaying microbial pyrimidine-based metabolites to alpha-beta T cell receptors (TCR) on innate-type mucosal-associated invariant T (MAIT) cells. In complex with B2M preferentially presents riboflavin-derived metabolites to semi-invariant TCRs on MAIT cells, guiding immune surveillance of the microbial metabolome at mucosal epithelial barriers. Signature pyrimidine-based microbial antigens are generated via non-enzymatic condensation of metabolite intermediates of the riboflavin pathway with by-products arising from other metabolic pathways such as glycolysis. Typical potent antigenic metabolites are 5-(2-oxoethylideneamino)-6-D-ribitylaminouracil (5-OE-RU) and 5-(2-oxopropylideneamino)-6-D-ribitylaminouracil (5-OP-RU), products of condensation of 5-amino-6-D-ribityaminouracil (5-A-RU) with glyoxal or methylglyoxal by-products, respectively. May present microbial antigens to various MAIT cell subsets, providing for unique recognition of diverse microbes, including pathogens that do not synthesize riboflavin. Upon antigen recognition, elicits rapid innate-type MAIT cell activation to eliminate pathogenic microbes by directly killing infected cells. During T cell development, drives thymic selection and post-thymic terminal differentiation of MAIT cells in a process dependent on commensal microflora. Acts as an immune sensor of cancer cell metabolome. May present a tumor-specific or -associated metabolite essential for cancer cell survival to a pan-cancer TCR on a non-MAIT CD8-positive T cell clone, triggering T cell-mediated killing of a wide range of cancer cell types. May present tumor-enriched pyridoxal and pyridoxal 5'-phosphate antigens, enabling preferential recognition of cancer cells. Presents nucleobase carbonyl adducts generated during oxidative stress. Captures M3Ade, a nucleobase adduct composed of one adenine modified by a malondialdehyde trimer, for recognition by MR1-restricted T cell clones expressing a polyclonal TCR repertoire. The sequence is that of Major histocompatibility complex class I-related protein 1 from Rattus norvegicus (Rat).